A 101-amino-acid chain; its full sequence is MDPQSAIYTLPRVPTAAPTTGGVSWSHVGEVAILSFVALICIYLLYLWVLRDLILVLKARRGRSTEELIFGSEAVDRRHPIPNTLVPTAPVHPGPFVPGQG.

The chain crosses the membrane as a helical span at residues 30-50; it reads EVAILSFVALICIYLLYLWVL.

The protein belongs to the mastrevirus movement protein family. In terms of assembly, interacts with the capsid protein (CP). Part of a MP-CP-viral DNA complex.

It localises to the host membrane. Involved in the viral transport within, and between cells. This is Movement protein from Maize streak virus genotype D (isolate Raw) (MSV).